A 163-amino-acid chain; its full sequence is Photosystem II extrinsic protein V (163 aa).

An N-terminal signal peptide occupies residues 1-26; sequence MFRRLIGVVVATALLTFQLIVGSATA. Positions 63, 66, 67, and 118 each coordinate heme c.

The protein belongs to the cytochrome c family. PsbV subfamily. As to quaternary structure, PSII is composed of 1 copy each of membrane proteins PsbA, PsbB, PsbC, PsbD, PsbE, PsbF, PsbH, PsbI, PsbJ, PsbK, PsbL, PsbM, PsbT, PsbX, PsbY, PsbZ, Psb30/Ycf12, peripheral proteins PsbO, CyanoQ (PsbQ), PsbU, PsbV and a large number of cofactors. It forms dimeric complexes. It depends on heme c as a cofactor.

It localises to the cellular thylakoid membrane. Functionally, one of the extrinsic, lumenal subunits of photosystem II (PSII). PSII is a light-driven water plastoquinone oxidoreductase, using light energy to abstract electrons from H(2)O, generating a proton gradient subsequently used for ATP formation. The extrinsic proteins stabilize the structure of photosystem II oxygen-evolving complex (OEC), the ion environment of oxygen evolution and protect the OEC against heat-induced inactivation. Low-potential cytochrome c that plays a role in the OEC of PSII. The polypeptide is Photosystem II extrinsic protein V (Nostoc sp. (strain PCC 7120 / SAG 25.82 / UTEX 2576)).